The sequence spans 350 residues: Eukaryotic translation initiation factor 3 subunit I (350 aa).

6 WD repeats span residues 8-49 (GHER…GTLE), 51-89 (HQGV…CVYT), 91-135 (DSPS…ATLS), 149-188 (SEGS…LVTS), 198-240 (EKNV…KVYK), and 296-335 (GHFG…QDFL).

Belongs to the eIF-3 subunit I family. In terms of assembly, component of the eukaryotic translation initiation factor 3 (eIF-3) complex.

It localises to the cytoplasm. Component of the eukaryotic translation initiation factor 3 (eIF-3) complex, which is involved in protein synthesis of a specialized repertoire of mRNAs and, together with other initiation factors, stimulates binding of mRNA and methionyl-tRNAi to the 40S ribosome. The eIF-3 complex specifically targets and initiates translation of a subset of mRNAs involved in cell proliferation. This Candida albicans (strain SC5314 / ATCC MYA-2876) (Yeast) protein is Eukaryotic translation initiation factor 3 subunit I.